Here is a 209-residue protein sequence, read N- to C-terminus: Tektin bundle-interacting protein 1 (209 aa).

Microtubule inner protein component of sperm flagellar doublet microtubules.

It is found in the cytoplasm. The protein localises to the cytoskeleton. It localises to the cilium axoneme. The protein resides in the flagellum axoneme. Functionally, microtubule inner protein (MIP) part of the dynein-decorated doublet microtubules (DMTs) in cilia axoneme, which is required for motile cilia beating. Located at the center of the tektin bundle where may function to recruit tektins or stabilize the bundle. The polypeptide is Tektin bundle-interacting protein 1 (TEKTIP1) (Macaca fascicularis (Crab-eating macaque)).